Consider the following 354-residue polypeptide: Sulfate/thiosulfate import ATP-binding protein CysA (354 aa).

Residues 3-237 (IEVRGLSKRF…PATPFVYGFL (235 aa)) enclose the ABC transporter domain. Residue 35–42 (GPSGCGKT) coordinates ATP.

Belongs to the ABC transporter superfamily. Sulfate/tungstate importer (TC 3.A.1.6) family. In terms of assembly, the complex is composed of two ATP-binding proteins (CysA), two transmembrane proteins (CysT and CysW) and a solute-binding protein (CysP).

It is found in the cell inner membrane. The enzyme catalyses sulfate(out) + ATP + H2O = sulfate(in) + ADP + phosphate + H(+). It carries out the reaction thiosulfate(out) + ATP + H2O = thiosulfate(in) + ADP + phosphate + H(+). In terms of biological role, part of the ABC transporter complex CysAWTP involved in sulfate/thiosulfate import. Responsible for energy coupling to the transport system. The sequence is that of Sulfate/thiosulfate import ATP-binding protein CysA from Bordetella parapertussis (strain 12822 / ATCC BAA-587 / NCTC 13253).